The primary structure comprises 348 residues: D-erythrose-4-phosphate dehydrogenase (348 aa).

Residues 12 to 13 (RI) and Arg-81 contribute to the NAD(+) site. Residues 154 to 156 (SCT), Arg-200, 213 to 214 (TK), and Arg-236 each bind substrate. Cys-155 acts as the Nucleophile in catalysis. Asn-318 contributes to the NAD(+) binding site.

The protein belongs to the glyceraldehyde-3-phosphate dehydrogenase family. Epd subfamily. Homotetramer.

It is found in the cytoplasm. The catalysed reaction is D-erythrose 4-phosphate + NAD(+) + H2O = 4-phospho-D-erythronate + NADH + 2 H(+). The protein operates within cofactor biosynthesis; pyridoxine 5'-phosphate biosynthesis; pyridoxine 5'-phosphate from D-erythrose 4-phosphate: step 1/5. In terms of biological role, catalyzes the NAD-dependent conversion of D-erythrose 4-phosphate to 4-phosphoerythronate. This is D-erythrose-4-phosphate dehydrogenase from Salmonella paratyphi A (strain ATCC 9150 / SARB42).